The chain runs to 256 residues: 5-keto-4-deoxy-D-glucarate aldolase (256 aa).

Catalysis depends on His-50, which acts as the Proton acceptor. A substrate-binding site is contributed by Gln-151. Glu-153 serves as a coordination point for Mg(2+). Substrate-binding residues include Ser-178 and Asp-179. Asp-179 provides a ligand contact to Mg(2+).

This sequence belongs to the HpcH/HpaI aldolase family. KDGluc aldolase subfamily. As to quaternary structure, homohexamer; trimer of dimers. Mg(2+) serves as cofactor.

It carries out the reaction 5-dehydro-4-deoxy-D-glucarate = 2-hydroxy-3-oxopropanoate + pyruvate. The enzyme catalyses 2-dehydro-3-deoxy-D-glucarate = 2-hydroxy-3-oxopropanoate + pyruvate. It functions in the pathway carbohydrate acid metabolism; galactarate degradation; D-glycerate from galactarate: step 2/3. Catalyzes the reversible retro-aldol cleavage of both 5-keto-4-deoxy-D-glucarate and 2-keto-3-deoxy-D-glucarate to pyruvate and tartronic semialdehyde. This Escherichia coli (strain K12 / DH10B) protein is 5-keto-4-deoxy-D-glucarate aldolase.